The sequence spans 336 residues: Cell division protein ZipA (336 aa).

Residues 1–2 (ME) lie on the Periplasmic side of the membrane. A helical membrane pass occupies residues 3 to 23 (LHILFFILAGLLIAVLISFSL). Topologically, residues 24-336 (WSARREKSRI…SRQSYLARVS (313 aa)) are cytoplasmic. The disordered stretch occupies residues 56-77 (PSLNPQSYAQTTGQHGETEADN). The span at 59-70 (NPQSYAQTTGQH) shows a compositional bias: polar residues.

Belongs to the ZipA family. Interacts with FtsZ via their C-terminal domains.

The protein localises to the cell inner membrane. Essential cell division protein that stabilizes the FtsZ protofilaments by cross-linking them and that serves as a cytoplasmic membrane anchor for the Z ring. Also required for the recruitment to the septal ring of downstream cell division proteins. This Actinobacillus pleuropneumoniae serotype 3 (strain JL03) protein is Cell division protein ZipA.